The sequence spans 192 residues: Ion-translocating oxidoreductase complex subunit B (192 aa).

The interval 1–26 is hydrophobic; that stretch reads MNTIWIAVAAISLLGLAFGAILGYAS. One can recognise a 4Fe-4S domain in the interval 32–91; that stretch reads EDDPVVEKIDEILPQSQCGQCGYPGCRPYAEAISCNGEKINRCAPGGEAVMLKISELLNV. 12 residues coordinate [4Fe-4S] cluster: cysteine 49, cysteine 52, cysteine 57, cysteine 74, cysteine 117, cysteine 120, cysteine 123, cysteine 127, cysteine 147, cysteine 150, cysteine 153, and cysteine 157. 4Fe-4S ferredoxin-type domains lie at 108–137 and 138–167; these read VVAV…GATR and AMHT…LQPV.

It belongs to the 4Fe4S bacterial-type ferredoxin family. RnfB subfamily. As to quaternary structure, the complex is composed of six subunits: RsxA, RsxB, RsxC, RsxD, RsxE and RsxG. It depends on [4Fe-4S] cluster as a cofactor.

Its subcellular location is the cell inner membrane. Part of a membrane-bound complex that couples electron transfer with translocation of ions across the membrane. Required to maintain the reduced state of SoxR. The protein is Ion-translocating oxidoreductase complex subunit B of Escherichia fergusonii (strain ATCC 35469 / DSM 13698 / CCUG 18766 / IAM 14443 / JCM 21226 / LMG 7866 / NBRC 102419 / NCTC 12128 / CDC 0568-73).